The chain runs to 196 residues: Large ribosomal subunit protein uL10 (196 aa).

A disordered region spans residues 163-196; sequence GAPAAAEAPAAEEAPAAEAAETEAPAEAAATEEN. A compositionally biased stretch (low complexity) spans 164–196; sequence APAAAEAPAAEEAPAAEAAETEAPAEAAATEEN.

It belongs to the universal ribosomal protein uL10 family. As to quaternary structure, part of the ribosomal stalk of the 50S ribosomal subunit. The N-terminus interacts with L11 and the large rRNA to form the base of the stalk. The C-terminus forms an elongated spine to which L12 dimers bind in a sequential fashion forming a multimeric L10(L12)X complex.

Its function is as follows. Forms part of the ribosomal stalk, playing a central role in the interaction of the ribosome with GTP-bound translation factors. The protein is Large ribosomal subunit protein uL10 of Arthrobacter sp. (strain FB24).